The sequence spans 224 residues: Toxin coregulated pilin (224 aa).

Positions 1–25 (MQLLKQLFKKKFVKEEHDKKTGQEG) are cleaved as a propeptide — atypical leader sequence. At Met-26 the chain carries N-methylmethionine. Residues 26–46 (MTLLEVIIVLGIMGVVSAGVV) form a helical membrane-spanning segment. Cys-145 and Cys-211 are joined by a disulfide.

Its subcellular location is the fimbrium. The protein localises to the membrane. Major component of the toxin co-regulated pilus (tcp) which is a type IV pilus essential for bacterial aggregation and subsequent colonization in the host small intestine. The polypeptide is Toxin coregulated pilin (tcpA) (Vibrio cholerae serotype O1 (strain ATCC 39315 / El Tor Inaba N16961)).